The primary structure comprises 956 residues: Valine--tRNA ligase (956 aa).

The 'HIGH' region motif lies at 43 to 53 (PNITGNLHIGH). Residues 556-560 (KMSKS) carry the 'KMSKS' region motif. Lysine 559 contacts ATP. Residues 889 to 920 (PKEKELKNLNKEISKIQLAINKLQQRLSNEEF) adopt a coiled-coil conformation.

The protein belongs to the class-I aminoacyl-tRNA synthetase family. ValS type 1 subfamily. In terms of assembly, monomer.

The protein localises to the cytoplasm. The catalysed reaction is tRNA(Val) + L-valine + ATP = L-valyl-tRNA(Val) + AMP + diphosphate. In terms of biological role, catalyzes the attachment of valine to tRNA(Val). As ValRS can inadvertently accommodate and process structurally similar amino acids such as threonine, to avoid such errors, it has a 'posttransfer' editing activity that hydrolyzes mischarged Thr-tRNA(Val) in a tRNA-dependent manner. In Buchnera aphidicola subsp. Baizongia pistaciae (strain Bp), this protein is Valine--tRNA ligase.